The chain runs to 533 residues: CTP synthase (533 aa).

Positions 1–269 (MKKNLKILVI…HEILSSKLNI (269 aa)) are amidoligase domain. Position 16 (serine 16) interacts with CTP. Serine 16 contributes to the UTP binding site. Residues 17–22 (GIGKGV) and aspartate 73 contribute to the ATP site. Mg(2+) is bound by residues aspartate 73 and glutamate 143. Residues 150–152 (DME), 190–195 (KSKPTQ), and lysine 226 each bind CTP. UTP contacts are provided by residues 190 to 195 (KSKPTQ) and lysine 226. One can recognise a Glutamine amidotransferase type-1 domain in the interval 304–533 (YAELDDSYAS…LFLGLIKACI (230 aa)). Glycine 355 provides a ligand contact to L-glutamine. The active-site Nucleophile; for glutamine hydrolysis is the cysteine 382. Residues 383–386 (LGLQ), glutamate 406, and arginine 466 contribute to the L-glutamine site. Catalysis depends on residues histidine 511 and glutamate 513.

It belongs to the CTP synthase family. In terms of assembly, homotetramer.

It carries out the reaction UTP + L-glutamine + ATP + H2O = CTP + L-glutamate + ADP + phosphate + 2 H(+). It catalyses the reaction L-glutamine + H2O = L-glutamate + NH4(+). The catalysed reaction is UTP + NH4(+) + ATP = CTP + ADP + phosphate + 2 H(+). The protein operates within pyrimidine metabolism; CTP biosynthesis via de novo pathway; CTP from UDP: step 2/2. Its activity is regulated as follows. Allosterically activated by GTP, when glutamine is the substrate; GTP has no effect on the reaction when ammonia is the substrate. The allosteric effector GTP functions by stabilizing the protein conformation that binds the tetrahedral intermediate(s) formed during glutamine hydrolysis. Inhibited by the product CTP, via allosteric rather than competitive inhibition. Functionally, catalyzes the ATP-dependent amination of UTP to CTP with either L-glutamine or ammonia as the source of nitrogen. Regulates intracellular CTP levels through interactions with the four ribonucleotide triphosphates. This chain is CTP synthase, found in Borreliella burgdorferi (strain ATCC 35210 / DSM 4680 / CIP 102532 / B31) (Borrelia burgdorferi).